Consider the following 133-residue polypeptide: Small ribosomal subunit protein uS9 (133 aa).

A compositionally biased stretch (basic and acidic residues) spans 98 to 113; it reads RKPLKTEGHLSRDPRA. The disordered stretch occupies residues 98–133; it reads RKPLKTEGHLSRDPRAKERRKYGLKKARKAPQFSKR. Over residues 114 to 133 the composition is skewed to basic residues; it reads KERRKYGLKKARKAPQFSKR.

Belongs to the universal ribosomal protein uS9 family.

The chain is Small ribosomal subunit protein uS9 from Parasynechococcus marenigrum (strain WH8102).